The sequence spans 845 residues: Lon protease (845 aa).

One can recognise a Lon N-terminal domain in the interval 45–242 (MPILALRNMI…RLLYLLHKEL (198 aa)). Residue 393 to 400 (GPPGVGKT) coordinates ATP. The Lon proteolytic domain maps to 629–811 (NGDAGVVIGL…NEVLKEALLE (183 aa)). Residues S717 and K760 contribute to the active site.

It belongs to the peptidase S16 family. As to quaternary structure, homohexamer. Organized in a ring with a central cavity.

The protein localises to the cytoplasm. It catalyses the reaction Hydrolysis of proteins in presence of ATP.. Functionally, ATP-dependent serine protease that mediates the selective degradation of mutant and abnormal proteins as well as certain short-lived regulatory proteins. Required for cellular homeostasis and for survival from DNA damage and developmental changes induced by stress. Degrades polypeptides processively to yield small peptide fragments that are 5 to 10 amino acids long. Binds to DNA in a double-stranded, site-specific manner. This chain is Lon protease, found in Porphyromonas gingivalis (strain ATCC 33277 / DSM 20709 / CIP 103683 / JCM 12257 / NCTC 11834 / 2561).